A 548-amino-acid polypeptide reads, in one-letter code: Chaperonin GroEL (548 aa).

ATP-binding positions include 30–33 (TLGP), Lys51, 87–91 (DGTTT), Gly415, and Asp496.

Belongs to the chaperonin (HSP60) family. As to quaternary structure, forms a cylinder of 14 subunits composed of two heptameric rings stacked back-to-back. Interacts with the co-chaperonin GroES.

Its subcellular location is the cytoplasm. It carries out the reaction ATP + H2O + a folded polypeptide = ADP + phosphate + an unfolded polypeptide.. In terms of biological role, together with its co-chaperonin GroES, plays an essential role in assisting protein folding. The GroEL-GroES system forms a nano-cage that allows encapsulation of the non-native substrate proteins and provides a physical environment optimized to promote and accelerate protein folding. The chain is Chaperonin GroEL from Haemophilus influenzae (strain PittGG).